The following is a 180-amino-acid chain: Geminin homolog (180 aa).

The span at 1-27 shows a compositional bias: polar residues; sequence MSRIGLQQLNNSARNSPFGSEKATGTK. A disordered region spans residues 1–29; that stretch reads MSRIGLQQLNNSARNSPFGSEKATGTKQI.

This sequence belongs to the geminin family. As to quaternary structure, homodimer. Interacts with cdt-1; the interaction most likely inhibits the ability of cdt-1 to load the mini-chromosome maintenance (MCM) complex onto DNA and therefore reduces DNA replication licensing activity. Interacts with nob-1 and ceh-32.

The protein resides in the cytoplasm. It is found in the nucleus. Functionally, inhibits DNA replication by binding to the DNA replication licensing factor cdt-1. Its interaction with cdt-1 prevents the cdt-1 loading of the mini-chromosome maintenance (MCM) complex onto DNA and therefore DNA replication licencing. In Caenorhabditis elegans, this protein is Geminin homolog.